The primary structure comprises 370 residues: DNA replication and repair protein RecF (370 aa).

ATP is bound at residue 30–37 (GPNGSGKT).

The protein belongs to the RecF family.

Its subcellular location is the cytoplasm. The RecF protein is involved in DNA metabolism; it is required for DNA replication and normal SOS inducibility. RecF binds preferentially to single-stranded, linear DNA. It also seems to bind ATP. This is DNA replication and repair protein RecF from Prosthecochloris aestuarii (strain DSM 271 / SK 413).